Here is a 236-residue protein sequence, read N- to C-terminus: Alpha-tubulin N-acetyltransferase (236 aa).

Residues 21 to 201 (ASVPDGVSRW…NKFVVFHGFF (181 aa)) enclose the N-acetyltransferase domain. Acetyl-CoA contacts are provided by residues 134 to 147 (FYVD…GYGK) and 171 to 180 (SDKLLGFMKK). Residues 217–236 (SPTGAAAAATGTKAKNEMPG) are disordered. Over residues 219-229 (TGAAAAATGTK) the composition is skewed to low complexity.

It belongs to the acetyltransferase ATAT1 family.

The enzyme catalyses L-lysyl-[alpha-tubulin] + acetyl-CoA = N(6)-acetyl-L-lysyl-[alpha-tubulin] + CoA + H(+). Specifically acetylates 'Lys-40' in alpha-tubulin on the lumenal side of microtubules. Promotes microtubule destabilization and accelerates microtubule dynamics; this activity may be independent of acetylation activity. Acetylates alpha-tubulin with a slow enzymatic rate, due to a catalytic site that is not optimized for acetyl transfer. Enters the microtubule through each end and diffuses quickly throughout the lumen of microtubules. Acetylates only long/old microtubules because of its slow acetylation rate since it does not have time to act on dynamically unstable microtubules before the enzyme is released. In Leishmania braziliensis, this protein is Alpha-tubulin N-acetyltransferase.